Here is a 258-residue protein sequence, read N- to C-terminus: Thiazole synthase (258 aa).

Residue lysine 98 is the Schiff-base intermediate with DXP of the active site. 1-deoxy-D-xylulose 5-phosphate is bound by residues glycine 159, 185-186 (AG), and 207-208 (NT).

The protein belongs to the ThiG family. Homotetramer. Forms heterodimers with either ThiH or ThiS.

It localises to the cytoplasm. It carries out the reaction [ThiS sulfur-carrier protein]-C-terminal-Gly-aminoethanethioate + 2-iminoacetate + 1-deoxy-D-xylulose 5-phosphate = [ThiS sulfur-carrier protein]-C-terminal Gly-Gly + 2-[(2R,5Z)-2-carboxy-4-methylthiazol-5(2H)-ylidene]ethyl phosphate + 2 H2O + H(+). It functions in the pathway cofactor biosynthesis; thiamine diphosphate biosynthesis. Functionally, catalyzes the rearrangement of 1-deoxy-D-xylulose 5-phosphate (DXP) to produce the thiazole phosphate moiety of thiamine. Sulfur is provided by the thiocarboxylate moiety of the carrier protein ThiS. In vitro, sulfur can be provided by H(2)S. In Bacillus cereus (strain ATCC 14579 / DSM 31 / CCUG 7414 / JCM 2152 / NBRC 15305 / NCIMB 9373 / NCTC 2599 / NRRL B-3711), this protein is Thiazole synthase.